The chain runs to 448 residues: GA-binding protein subunit beta-2 (448 aa).

ANK repeat units lie at residues 5–34 (DLGK…PFTT), 37–66 (LGTS…SRDA), 70–99 (VDRT…DVNA), 103–132 (LKMT…DVHA), and 136–166 (FDKS…QVNV). Ser256 bears the Phosphoserine mark. Disordered regions lie at residues 325 to 354 (EEEE…GNER) and 420 to 448 (ELEE…TVSS). Residues 337–354 (RIGEKTNSVEESKEGNER) show a composition bias toward basic and acidic residues. Residues 345–395 (VEESKEGNERELLQQQLQEANRRAQEYRHQLLKKEQEAEQYRLKLEAIARQ) adopt a coiled-coil conformation. Residues 428–448 (VTGSAGTTEPHTRVSMATVSS) are compositionally biased toward polar residues.

As to quaternary structure, heterotetramer of two alpha and two beta subunits. The C-terminal is necessary for the formation of a heterotetrameric GABP-alpha-2/beta-2 complex, and also facilitates homotypic dimerization. Interacts with ADGRB2.

Its subcellular location is the nucleus. In terms of biological role, may function as transcription factor capable of interacting with purine rich repeats (GA repeats). This Homo sapiens (Human) protein is GA-binding protein subunit beta-2 (GABPB2).